The following is a 185-amino-acid chain: NEDD8-conjugating enzyme UBE2F (185 aa).

Met1 is modified (N-acetylmethionine). Positions 1 to 29 are interaction with UBA3; that stretch reads MLTLASKLKRDDGLKGSRASATASDSTRR. The region spanning 32-185 is the UBC core domain; the sequence is VRDRLLVKEV…VEDYIKRYAR (154 aa). Cys116 (glycyl thioester intermediate) is an active-site residue.

This sequence belongs to the ubiquitin-conjugating enzyme family. UBE2F subfamily. In terms of assembly, interacts with UBA3 and RBX2. Interacts (N-terminally acetylated form) with (via DCUN1 domain) DCUN1D1, DCUN1D2, DCUN1D3, DCUN1D4 and DCUN1D5. The acetylation of Met-1 increases affinity for DCUN1D3 by about 2 orders of magnitude and is crucial for NEDD8 transfer to cullins.

The enzyme catalyses [E1 NEDD8-activating enzyme]-S-[NEDD8 protein]-yl-L-cysteine + [E2 NEDD8-conjugating enzyme]-L-cysteine = [E1 NEDD8-activating enzyme]-L-cysteine + [E2 NEDD8-conjugating enzyme]-S-[NEDD8-protein]-yl-L-cysteine.. The protein operates within protein modification; protein neddylation. Its function is as follows. Accepts the ubiquitin-like protein NEDD8 from the UBA3-NAE1 E1 complex and catalyzes its covalent attachment to other proteins. Together with the E3 ubiquitin ligase RNF7/RBX2, specifically neddylates cullin-5 (CUL5). Does not neddylate CUL1, CUL2, CUL3, CUL4A or CUL4B. Mediates neddylation of the CUL9-RBX1 complex. In Bos taurus (Bovine), this protein is NEDD8-conjugating enzyme UBE2F (UBE2F).